The sequence spans 217 residues: tRNA (guanine-N(7)-)-methyltransferase (217 aa).

4 residues coordinate S-adenosyl-L-methionine: glutamate 48, glutamate 73, asparagine 100, and aspartate 123. Aspartate 123 is an active-site residue. Positions 127 and 159 each coordinate substrate.

Belongs to the class I-like SAM-binding methyltransferase superfamily. TrmB family.

It catalyses the reaction guanosine(46) in tRNA + S-adenosyl-L-methionine = N(7)-methylguanosine(46) in tRNA + S-adenosyl-L-homocysteine. The protein operates within tRNA modification; N(7)-methylguanine-tRNA biosynthesis. Its function is as follows. Catalyzes the formation of N(7)-methylguanine at position 46 (m7G46) in tRNA. The polypeptide is tRNA (guanine-N(7)-)-methyltransferase (Leptospira borgpetersenii serovar Hardjo-bovis (strain JB197)).